The primary structure comprises 296 residues: Glycine--tRNA ligase alpha subunit (296 aa).

It belongs to the class-II aminoacyl-tRNA synthetase family. In terms of assembly, tetramer of two alpha and two beta subunits.

The protein localises to the cytoplasm. The enzyme catalyses tRNA(Gly) + glycine + ATP = glycyl-tRNA(Gly) + AMP + diphosphate. The polypeptide is Glycine--tRNA ligase alpha subunit (Desulfitobacterium hafniense (strain Y51)).